We begin with the raw amino-acid sequence, 292 residues long: MIKNLLNKRKYITVSSVELNDTELSEDEKPNIPSGMWSKCEKCAKILYTEDLRENFNVCPNCGHHFKLGAYERIKYLTDENTFVEFDKKMIGRNPLDFNGYEEKIKGYQKKSHVIEGVVTGEAYIAQRKVVLCVMDSNFMMGSMGTAVGEKITRAIEYATKNRLPLIIFTCSGGARMQEGIYSLMQMAKVSGAIYRHGRENLLYITVLTNPTTGGVTASFAMEGDIILSEPGCLVGFAGRRVIEGTINEKLPDDFQTAEFLLEKGFIDKIVQRKDLKQVITSLLRMHEVDYE.

The CoA carboxyltransferase N-terminal domain maps to 36-292 (MWSKCEKCAK…LLRMHEVDYE (257 aa)). C40, C43, C59, and C62 together coordinate Zn(2+). The segment at 40-62 (CEKCAKILYTEDLRENFNVCPNC) adopts a C4-type zinc-finger fold.

This sequence belongs to the AccD/PCCB family. Acetyl-CoA carboxylase is a heterohexamer composed of biotin carboxyl carrier protein (AccB), biotin carboxylase (AccC) and two subunits each of ACCase subunit alpha (AccA) and ACCase subunit beta (AccD). Zn(2+) is required as a cofactor.

It localises to the cytoplasm. The enzyme catalyses N(6)-carboxybiotinyl-L-lysyl-[protein] + acetyl-CoA = N(6)-biotinyl-L-lysyl-[protein] + malonyl-CoA. It participates in lipid metabolism; malonyl-CoA biosynthesis; malonyl-CoA from acetyl-CoA: step 1/1. Functionally, component of the acetyl coenzyme A carboxylase (ACC) complex. Biotin carboxylase (BC) catalyzes the carboxylation of biotin on its carrier protein (BCCP) and then the CO(2) group is transferred by the transcarboxylase to acetyl-CoA to form malonyl-CoA. The polypeptide is Acetyl-coenzyme A carboxylase carboxyl transferase subunit beta (Clostridium perfringens (strain 13 / Type A)).